Here is a 323-residue protein sequence, read N- to C-terminus: MNPENWTQVTSFVLLGFPSSHLIQFLVFLGLMVTYIVTATGKLLIIVLSWIDQRLHIQMYFFLRNFSFLELLLVTVVVPKMLVVILTGDHTISFVSCIIQSYLYFFLGTTDFFLLAVMSLDRYLAICRPLRYETLMNGHVCSQLVLASWLAGFLWVLCPTVLMASLPFCGPNGIDHFFRDSWPLLRLSCGDTHLLKLVAFMLSTLVLLGSLALTSVSYACILATVLRAPTAAERRKAFSTCASHLTVVVIIYGSSIFLYIRMSEAQSKLLNKGASVLSCIITPLLNPFIFTLRNDKVQQALREALGWPRLTAVMKLRVTSQRK.

Over 1–25 (MNPENWTQVTSFVLLGFPSSHLIQF) the chain is Extracellular. N-linked (GlcNAc...) asparagine glycosylation occurs at asparagine 5. Residues 26-46 (LVFLGLMVTYIVTATGKLLII) form a helical membrane-spanning segment. At 47–54 (VLSWIDQR) the chain is on the cytoplasmic side. A helical transmembrane segment spans residues 55–75 (LHIQMYFFLRNFSFLELLLVT). At 76–99 (VVVPKMLVVILTGDHTISFVSCII) the chain is on the extracellular side. Cysteines 97 and 189 form a disulfide. The helical transmembrane segment at 100–120 (QSYLYFFLGTTDFFLLAVMSL) threads the bilayer. Over 121–139 (DRYLAICRPLRYETLMNGH) the chain is Cytoplasmic. The helical transmembrane segment at 140–160 (VCSQLVLASWLAGFLWVLCPT) threads the bilayer. Topologically, residues 161-197 (VLMASLPFCGPNGIDHFFRDSWPLLRLSCGDTHLLKL) are extracellular. A helical membrane pass occupies residues 198 to 217 (VAFMLSTLVLLGSLALTSVS). The Cytoplasmic portion of the chain corresponds to 218–237 (YACILATVLRAPTAAERRKA). A helical transmembrane segment spans residues 238-258 (FSTCASHLTVVVIIYGSSIFL). Residues 259–271 (YIRMSEAQSKLLN) lie on the Extracellular side of the membrane. Residues 272–292 (KGASVLSCIITPLLNPFIFTL) form a helical membrane-spanning segment. At 293–323 (RNDKVQQALREALGWPRLTAVMKLRVTSQRK) the chain is on the cytoplasmic side.

The protein belongs to the G-protein coupled receptor 1 family.

It is found in the cell membrane. Its function is as follows. Odorant receptor. The protein is Olfactory receptor 6T1 (OR6T1) of Homo sapiens (Human).